The following is a 365-amino-acid chain: Peptide chain release factor 2 (365 aa).

The residue at position 252 (Gln-252) is an N5-methylglutamine.

This sequence belongs to the prokaryotic/mitochondrial release factor family. Methylated by PrmC. Methylation increases the termination efficiency of RF2.

It is found in the cytoplasm. Peptide chain release factor 2 directs the termination of translation in response to the peptide chain termination codons UGA and UAA. This is Peptide chain release factor 2 from Pseudoalteromonas translucida (strain TAC 125).